The primary structure comprises 146 residues: Ferric uptake regulation protein 2 (146 aa).

Positions 96 and 99 each coordinate Zn(2+).

This sequence belongs to the Fur family.

Its subcellular location is the cytoplasm. Functionally, acts as a global negative controlling element, employing Fe(2+) as a cofactor to bind the operator of the repressed genes. The chain is Ferric uptake regulation protein 2 (fur2) from Mycolicibacterium fortuitum (Mycobacterium fortuitum).